Consider the following 304-residue polypeptide: Protease HtpX homolog (304 aa).

The next 2 membrane-spanning stretches (helical) occupy residues 14–34 (IFII…IGII) and 39–59 (YLNG…IMVM). A Zn(2+)-binding site is contributed by histidine 144. The active site involves glutamate 145. Histidine 148 provides a ligand contact to Zn(2+). Transmembrane regions (helical) follow at residues 159-179 (IAIA…RMIF) and 202-222 (AIIY…ATAI). Glutamate 231 contacts Zn(2+).

Belongs to the peptidase M48B family. Zn(2+) is required as a cofactor.

It is found in the cell membrane. In Listeria monocytogenes serovar 1/2a (strain ATCC BAA-679 / EGD-e), this protein is Protease HtpX homolog.